A 137-amino-acid polypeptide reads, in one-letter code: Neutral phospholipase A2 ammodytin I2 (137 aa).

Residues 1–16 (MRTLWIVAVCLIGVEG) form the signal peptide. Intrachain disulfides connect cysteine 42-cysteine 131, cysteine 44-cysteine 60, cysteine 59-cysteine 111, cysteine 65-cysteine 137, cysteine 66-cysteine 104, cysteine 73-cysteine 97, and cysteine 91-cysteine 102. Ca(2+) contacts are provided by tyrosine 43, glycine 45, and glycine 47. The active site involves histidine 63. Aspartate 64 lines the Ca(2+) pocket. Aspartate 105 is a catalytic residue.

Belongs to the phospholipase A2 family. Group II subfamily. D49 sub-subfamily. Ca(2+) is required as a cofactor. As to expression, expressed by the venom gland.

The protein resides in the secreted. The catalysed reaction is a 1,2-diacyl-sn-glycero-3-phosphocholine + H2O = a 1-acyl-sn-glycero-3-phosphocholine + a fatty acid + H(+). In terms of biological role, snake venom phospholipase A2 (PLA2) that has enzymatic activity but is non-toxic. Displays low binding affinity and enzymatic activity on phosphatidylserine-containing vesicles and HEK-293 plasma membranes, in contrast to ammodytoxins that have high activity on these phospholipids. PLA2 catalyzes the calcium-dependent hydrolysis of the 2-acyl groups in 3-sn-phosphoglycerides. This Vipera ammodytes ammodytes (Western sand viper) protein is Neutral phospholipase A2 ammodytin I2.